We begin with the raw amino-acid sequence, 314 residues long: Olfactory receptor 2Z1 (314 aa).

Over 1-25 the chain is Extracellular; it reads MGDVNQSVASDFILVGLFSHSGSRQ. A glycan (N-linked (GlcNAc...) asparagine) is linked at Asn5. A helical membrane pass occupies residues 26–49; that stretch reads LLFSLVAVMFVIGLLGNTVLLFLI. Topologically, residues 50–57 are cytoplasmic; that stretch reads RVDSRLHT. A helical membrane pass occupies residues 58-79; the sequence is PMYFLLSQLSLFDIGCPMVTIP. Topologically, residues 80–100 are extracellular; it reads KMASDFLRGEGATSYGGGAAQ. Residues 101–120 form a helical membrane-spanning segment; that stretch reads IFFLTLMGVAEGVLLVLMSY. Over 121 to 139 the chain is Cytoplasmic; it reads DRYVAVCQPLQYPVLMRRQ. A helical membrane pass occupies residues 140–158; sequence VCLLMMGSSWVVGVLNASI. Over 159–195 the chain is Extracellular; that stretch reads QTSITLHFPYCASRIVDHFFCEVPALLKLSCADTCAY. Residues 196–219 traverse the membrane as a helical segment; it reads EMALSTSGVLILMLPLSLIATSYG. At 220 to 236 the chain is on the cytoplasmic side; it reads HVLQAVLSMRSEEARHK. A helical transmembrane segment spans residues 237–259; it reads AVTTCSSHITVVGLFYGAAVFMY. At 260–272 the chain is on the extracellular side; that stretch reads MVPCAYHSPQQDN. A helical membrane pass occupies residues 273 to 292; the sequence is VVSLFYSLVTPTLNPLIYSL. Residues 293–314 are Cytoplasmic-facing; the sequence is RNPEVWMALVKVLSRAGLRQMC.

This sequence belongs to the G-protein coupled receptor 1 family.

It is found in the cell membrane. In terms of biological role, odorant receptor. This Homo sapiens (Human) protein is Olfactory receptor 2Z1 (OR2Z1).